Here is a 429-residue protein sequence, read N- to C-terminus: Ribosomal RNA small subunit methyltransferase B (429 aa).

S-adenosyl-L-methionine-binding positions include cysteine 254–lysine 260, aspartate 277, aspartate 303, and aspartate 322. Cysteine 375 acts as the Nucleophile in catalysis. The segment at alanine 397–aspartate 419 is disordered. Over residues glutamate 400–leucine 412 the composition is skewed to polar residues.

It belongs to the class I-like SAM-binding methyltransferase superfamily. RsmB/NOP family.

It is found in the cytoplasm. The catalysed reaction is cytidine(967) in 16S rRNA + S-adenosyl-L-methionine = 5-methylcytidine(967) in 16S rRNA + S-adenosyl-L-homocysteine + H(+). Functionally, specifically methylates the cytosine at position 967 (m5C967) of 16S rRNA. This Salmonella heidelberg (strain SL476) protein is Ribosomal RNA small subunit methyltransferase B.